Reading from the N-terminus, the 203-residue chain is Endo-type membrane-bound lytic murein transglycosylase A (203 aa).

The signal sequence occupies residues 1-15; it reads MKLRWFAFLVVLLAG. The N-palmitoyl cysteine moiety is linked to residue cysteine 16. A lipid anchor (S-diacylglycerol cysteine) is attached at cysteine 16.

This sequence belongs to the transglycosylase Slt family.

The protein resides in the cell outer membrane. It carries out the reaction Endolytic cleavage of the (1-&gt;4)-beta-glycosidic linkage between N-acetylmuramic acid (MurNAc) and N-acetylglucosamine (GlcNAc) residues in peptidoglycan with concomitant formation of a 1,6-anhydrobond in the MurNAc residue.. Functionally, murein-degrading enzyme. May play a role in recycling of muropeptides during cell elongation and/or cell division. Preferentially cleaves at a distance of more than two disaccharide units from the ends of the glycan chain. The polypeptide is Endo-type membrane-bound lytic murein transglycosylase A (Citrobacter koseri (strain ATCC BAA-895 / CDC 4225-83 / SGSC4696)).